Consider the following 412-residue polypeptide: Argininosuccinate synthase (412 aa).

ATP contacts are provided by residues 20-28 and A48; that span reads AYSGGLDTS. 2 residues coordinate L-citrulline: Y100 and S105. Residue G130 coordinates ATP. The L-aspartate site is built by T132, N136, and D137. N136 is a binding site for L-citrulline. The L-citrulline site is built by R140, S189, S198, E274, and Y286.

This sequence belongs to the argininosuccinate synthase family. Type 1 subfamily. In terms of assembly, homotetramer.

It is found in the cytoplasm. The enzyme catalyses L-citrulline + L-aspartate + ATP = 2-(N(omega)-L-arginino)succinate + AMP + diphosphate + H(+). Its pathway is amino-acid biosynthesis; L-arginine biosynthesis; L-arginine from L-ornithine and carbamoyl phosphate: step 2/3. The sequence is that of Argininosuccinate synthase from Shewanella pealeana (strain ATCC 700345 / ANG-SQ1).